The primary structure comprises 332 residues: Palmitoyltransferase ZDHHC15B (332 aa).

Topologically, residues 1–14 (MALSRALRCCQRIF) are cytoplasmic. Residues 15–35 (SWIPVIIISSVVLWSYYAYVF) traverse the membrane as a helical segment. The Lumenal portion of the chain corresponds to 36–50 (ELCFVTLSNNLERVT). The helical transmembrane segment at 51–71 (YLLIFHVCFIMFCWTYWKAIF) threads the bilayer. Residues 72–166 (TPPSTPTKKF…NNCVGFSNYK (95 aa)) are Cytoplasmic-facing. One can recognise a DHHC domain in the interval 123-173 (RFCDRCQVIKPDRCHHCSVCETCVLKMDHHCPWVNNCVGFSNYKFFLLFLS). Positions 125 and 128 each coordinate Zn(2+). Lys-132 serves as a coordination point for substrate. Zn(2+) contacts are provided by His-138, Cys-139, Cys-142, Cys-145, and His-152. The active-site S-palmitoyl cysteine intermediate is Cys-153. Residue Cys-159 participates in Zn(2+) binding. A helical transmembrane segment spans residues 167 to 187 (FFLLFLSYSMIYCVFIASTVF). The Lumenal portion of the chain corresponds to 188 to 204 (QYFLKFWVGDLPNGPAK). The helical transmembrane segment at 205–228 (FHVLFLLFVALMFFVSLMFLFGYH) threads the bilayer. Residues 229-332 (CWLVAKNRST…GSSLLIRTES (104 aa)) lie on the Cytoplasmic side of the membrane. The interval 305–332 (EEKWVEDGGSDEESADENGSSLLIRTES) is disordered.

It belongs to the DHHC palmitoyltransferase family. In terms of processing, autopalmitoylated (in vitro).

The protein localises to the golgi apparatus membrane. It localises to the postsynaptic density. It catalyses the reaction L-cysteinyl-[protein] + hexadecanoyl-CoA = S-hexadecanoyl-L-cysteinyl-[protein] + CoA. The enzyme catalyses L-cysteinyl-[protein] + tetradecanoyl-CoA = S-tetradecanoyl-L-cysteinyl-[protein] + CoA. The catalysed reaction is L-cysteinyl-[protein] + octadecanoyl-CoA = S-octadecanoyl-L-cysteinyl-[protein] + CoA. Functionally, palmitoyltransferase that catalyzes the addition of palmitate onto various protein substrates. Has no stringent fatty acid selectivity and in addition to palmitate can also transfer onto target proteins myristate from tetradecanoyl-CoA and stearate from octadecanoyl-CoA. May thereby regulate target proteins association and localization to membranes. In the nervous system, probably catalyzes the palmitoylation of synaptic proteins and is involved in the differentiation of dopaminergic neurons and the development of the diencephalon. This chain is Palmitoyltransferase ZDHHC15B (zdhhc15b), found in Danio rerio (Zebrafish).